We begin with the raw amino-acid sequence, 328 residues long: MHTLIERLEKVTNSKELEEVRLNALGKKGVFADKFNQLKNLNGGEKNAFAKEIHHYKQAFEKAFEWKKKAILELELEERLKKEKIDVSLFNAIKTSSSHPLNYTKNKIIEFFTPLGYKLEIGSLVEDDFHNFSALNLPPYHPARDMQDTFYFKDHKLLRTHTSPVQIHTMQEQTPPIKMICLGETFRRDYDLTHTPMFHQIEGLVVDQKGNIRFTHLKGVIEDFLHYFFGGVKLRWRSSFFPFTEPSAEVDISCVFCKQEGCRVCSHTGWLEVLGCGMVNNAVFEAIGYENVSGFAFGMGIERLAMLTCQINDLRSFFETDLRVLESF.

Residue Glu245 participates in Mg(2+) binding.

The protein belongs to the class-II aminoacyl-tRNA synthetase family. Phe-tRNA synthetase alpha subunit type 1 subfamily. Tetramer of two alpha and two beta subunits. Mg(2+) is required as a cofactor.

It localises to the cytoplasm. The catalysed reaction is tRNA(Phe) + L-phenylalanine + ATP = L-phenylalanyl-tRNA(Phe) + AMP + diphosphate + H(+). The protein is Phenylalanine--tRNA ligase alpha subunit of Helicobacter pylori (strain P12).